We begin with the raw amino-acid sequence, 347 residues long: Holliday junction branch migration complex subunit RuvB (347 aa).

Residues Thr4–Tyr185 form a large ATPase domain (RuvB-L) region. ATP contacts are provided by residues Leu24, Arg25, Gly66, Lys69, Thr70, Thr71, Glu132–Tyr134, Arg175, Tyr185, and Arg222. Position 70 (Thr70) interacts with Mg(2+). Residues Ser186 to Asp256 are small ATPAse domain (RuvB-S). Residues Ala259–Gln347 are head domain (RuvB-H). DNA is bound by residues Arg295, Arg314, and Arg319.

This sequence belongs to the RuvB family. In terms of assembly, homohexamer. Forms an RuvA(8)-RuvB(12)-Holliday junction (HJ) complex. HJ DNA is sandwiched between 2 RuvA tetramers; dsDNA enters through RuvA and exits via RuvB. An RuvB hexamer assembles on each DNA strand where it exits the tetramer. Each RuvB hexamer is contacted by two RuvA subunits (via domain III) on 2 adjacent RuvB subunits; this complex drives branch migration. In the full resolvosome a probable DNA-RuvA(4)-RuvB(12)-RuvC(2) complex forms which resolves the HJ.

The protein resides in the cytoplasm. It carries out the reaction ATP + H2O = ADP + phosphate + H(+). In terms of biological role, the RuvA-RuvB-RuvC complex processes Holliday junction (HJ) DNA during genetic recombination and DNA repair, while the RuvA-RuvB complex plays an important role in the rescue of blocked DNA replication forks via replication fork reversal (RFR). RuvA specifically binds to HJ cruciform DNA, conferring on it an open structure. The RuvB hexamer acts as an ATP-dependent pump, pulling dsDNA into and through the RuvAB complex. RuvB forms 2 homohexamers on either side of HJ DNA bound by 1 or 2 RuvA tetramers; 4 subunits per hexamer contact DNA at a time. Coordinated motions by a converter formed by DNA-disengaged RuvB subunits stimulates ATP hydrolysis and nucleotide exchange. Immobilization of the converter enables RuvB to convert the ATP-contained energy into a lever motion, pulling 2 nucleotides of DNA out of the RuvA tetramer per ATP hydrolyzed, thus driving DNA branch migration. The RuvB motors rotate together with the DNA substrate, which together with the progressing nucleotide cycle form the mechanistic basis for DNA recombination by continuous HJ branch migration. Branch migration allows RuvC to scan DNA until it finds its consensus sequence, where it cleaves and resolves cruciform DNA. This is Holliday junction branch migration complex subunit RuvB from Nitrosospira multiformis (strain ATCC 25196 / NCIMB 11849 / C 71).